Consider the following 193-residue polypeptide: Potassium-transporting ATPase KdpC subunit (193 aa).

A helical transmembrane segment spans residues Ile-14–Ala-34.

It belongs to the KdpC family. As to quaternary structure, the system is composed of three essential subunits: KdpA, KdpB and KdpC.

The protein localises to the cell membrane. In terms of biological role, part of the high-affinity ATP-driven potassium transport (or Kdp) system, which catalyzes the hydrolysis of ATP coupled with the electrogenic transport of potassium into the cytoplasm. This subunit acts as a catalytic chaperone that increases the ATP-binding affinity of the ATP-hydrolyzing subunit KdpB by the formation of a transient KdpB/KdpC/ATP ternary complex. The chain is Potassium-transporting ATPase KdpC subunit from Bacillus mycoides (strain KBAB4) (Bacillus weihenstephanensis).